The sequence spans 760 residues: Serine/threonine-protein kinase dkf-1 (760 aa).

2 Phorbol-ester/DAG-type zinc fingers span residues 103-153 (PHVV…GIIV) and 194-244 (PHTL…PSNC). The PH domain maps to 316–444 (KNLEGWMIHF…QFIKESLQPP (129 aa)). The Protein kinase domain maps to 464 to 725 (VLSDKTLGSG…IEKCLEHGWL (262 aa)). Residues 470–478 (LGSGQFGTV) and lysine 493 contribute to the ATP site. Aspartate 589 serves as the catalytic Proton acceptor. Threonine 626 carries the post-translational modification Phosphothreonine.

It belongs to the protein kinase superfamily. CAMK Ser/Thr protein kinase family. PKD subfamily. It depends on Mg(2+) as a cofactor. In terms of processing, prolonged phosphorylation at Thr-626 results in ubiquitination and degradation.

Its subcellular location is the cytoplasm. The protein localises to the membrane. It carries out the reaction L-seryl-[protein] + ATP = O-phospho-L-seryl-[protein] + ADP + H(+). The catalysed reaction is L-threonyl-[protein] + ATP = O-phospho-L-threonyl-[protein] + ADP + H(+). Its activity is regulated as follows. Activated by DAG and phorbol esters. Phorbol-ester/DAG-type domain 1 binds phorbol ester with high affinity and mediates accumulation at the cell periphery. Phorbol-ester/DAG-type domain 2 binds phorbol ester with low affinity but may mediate initial contact, resulting in a conformational change allowing previously occluded domain 1 to anchor the kinase. Phosphorylation on Thr-626 is then also required for activation and may also result in a further conformational change. In terms of biological role, converts transient diacylglycerol (DAG) signals into prolonged physiological effects, independently of PKC. Role in the regulation of growth and neuromuscular control of movement. Involved in immune response to S.aureus bacterium by activating transcription factor hlh-30 downstream of phospholipase plc-1. The chain is Serine/threonine-protein kinase dkf-1 from Caenorhabditis briggsae.